Consider the following 285-residue polypeptide: Involucrin (285 aa).

3 disordered regions span residues 1–93 (MSQQ…QEQK), 120–256 (LEQQ…AQVQ), and 266–285 (LPLI…PEHQ). The span at 27-39 (IDTQQEQVKQPTS) shows a compositional bias: polar residues. 3 stretches are compositionally biased toward low complexity: residues 72–87 (EQQC…QKQQ), 120–129 (LEQQQEQQES), and 137–147 (EQCLEQQQEQQ). Composition is skewed to basic and acidic residues over residues 149–165 (SQEK…KEEL), 175–185 (EQCEKHQEAKN), and 200–233 (QQKE…KEEQ). The span at 235–248 (LEQQGQQEGQLEQP) shows a compositional bias: low complexity. Over residues 272–285 (QHQKQEVHDPPEHQ) the composition is skewed to basic and acidic residues.

The protein belongs to the involucrin family. As to quaternary structure, directly or indirectly cross-linked to cornifelin (CNFN). Substrate of transglutaminase. Specific glutamines or lysines are cross-linked to keratins, desmoplakin and to inter involucrin molecules. Keratinocytes of epidermis and other stratified squamous epithelia.

It is found in the cytoplasm. Its function is as follows. Part of the insoluble cornified cell envelope (CE) of stratified squamous epithelia. The sequence is that of Involucrin (IVL) from Canis lupus familiaris (Dog).